Here is a 672-residue protein sequence, read N- to C-terminus: Beta-galactosidase GanA (672 aa).

Arginine 105 serves as a coordination point for substrate. Cysteine 109 contributes to the Zn(2+) binding site. Asparagine 143 is a binding site for substrate. Glutamate 144 functions as the Proton donor in the catalytic mechanism. Zn(2+) is bound by residues cysteine 149, cysteine 151, and cysteine 154. Residue glutamate 308 is the Nucleophile of the active site. Substrate is bound by residues tryptophan 316 and 356–359 (EKLH).

The protein belongs to the glycosyl hydrolase 42 family. Homotrimer.

The catalysed reaction is Hydrolysis of terminal non-reducing beta-D-galactose residues in beta-D-galactosides.. With respect to regulation, inhibited by zinc, cobalt and copper ions. Its function is as follows. Involved in galactan degradation. Hydrolyzes galactooligosaccharides released by the endo-beta-1,4-galactanase GanB from galactan. Degrades galactotetraose, galactotriose and galactobiose, generating galactose as the end product. It is unable to use lactose. In vitro, shows maximal activity with o-nitrophenyl-beta-D-galactopyranoside (ONPG) and p-nitrophenyl-beta-D-galactopyranoside (PNPG) as substrates, trace activity with p-nitrophenyl-alpha-L-arabinopyranoside and o-nitrophenyl-beta-D-fucopyranoside as substrates, but no activity with p-nitrophenyl-alpha-D-galactopyranoside, p-nitrophenyl-beta-D-glucopyranoside, o-nitrophenyl-beta-D-xylopyranoside, p-nitrophenyl-beta-D-mannopyranoside or p-nitrophenyl-alpha-L-arabinofuranoside as substrates. The polypeptide is Beta-galactosidase GanA (Bacillus subtilis (strain 168)).